A 138-amino-acid polypeptide reads, in one-letter code: Large ribosomal subunit protein uL16 (138 aa).

The segment covering 1 to 18 has biased composition (basic residues); that stretch reads MALMPKRVKHRKSQRGRI. Positions 1–21 are disordered; the sequence is MALMPKRVKHRKSQRGRIKGN.

The protein belongs to the universal ribosomal protein uL16 family. Part of the 50S ribosomal subunit.

In terms of biological role, binds 23S rRNA and is also seen to make contacts with the A and possibly P site tRNAs. This is Large ribosomal subunit protein uL16 from Rhodopirellula baltica (strain DSM 10527 / NCIMB 13988 / SH1).